Consider the following 639-residue polypeptide: 3D-(3,5/4)-trihydroxycyclohexane-1,2-dione hydrolase (639 aa).

Glutamate 62 serves as a coordination point for thiamine diphosphate. A thiamine pyrophosphate binding region spans residues 438–518 (SLPGDLQRMW…INILLFDNCG (81 aa)). Residues aspartate 489 and asparagine 516 each coordinate Mg(2+).

Belongs to the TPP enzyme family. Mg(2+) is required as a cofactor. It depends on thiamine diphosphate as a cofactor.

It catalyses the reaction 3D-3,5/4-trihydroxycyclohexane-1,2-dione + H2O = 5-deoxy-D-glucuronate + H(+). It participates in polyol metabolism; myo-inositol degradation into acetyl-CoA; acetyl-CoA from myo-inositol: step 3/7. Involved in the cleavage of the C1-C2 bond of 3D-(3,5/4)-trihydroxycyclohexane-1,2-dione (THcHDO) to yield 5-deoxy-glucuronate (5DG). This chain is 3D-(3,5/4)-trihydroxycyclohexane-1,2-dione hydrolase, found in Clostridium perfringens (strain 13 / Type A).